The sequence spans 285 residues: Methyltransferase grgD (285 aa).

Belongs to the methyltransferase superfamily. LaeA methyltransferase family.

It participates in secondary metabolite biosynthesis. Its function is as follows. Methyltransferase; part of the gene cluster that mediates the biosynthesis of gregatin A, a fungal polyketide featuring an alkylated furanone core. The PKS grgA synthesizes C11 and C4 polyketide chains in the presence and absence of the trans-enoyl reductase grgB, respectively. The polyketide transferase grgF is then responsible for the fusion of the two carbon chains to produce the furanone skeleton of gregatin A. Next, the cytochrome P450 monooxygenase grgG accepts performs the oxidative cyclization to furnish the gregatin scaffold and leads to the formation of desmethylgregatin A. Finally, the O-methyltransferase grgD methylates the carboxyl group of desmethylgregatin A to provide gregatin A. In Penicillium sp, this protein is Methyltransferase grgD.